The primary structure comprises 225 residues: Protein-L-isoaspartate O-methyltransferase (225 aa).

Serine 63 is a catalytic residue.

The protein belongs to the methyltransferase superfamily. L-isoaspartyl/D-aspartyl protein methyltransferase family.

It is found in the cytoplasm. It catalyses the reaction [protein]-L-isoaspartate + S-adenosyl-L-methionine = [protein]-L-isoaspartate alpha-methyl ester + S-adenosyl-L-homocysteine. Catalyzes the methyl esterification of L-isoaspartyl residues in peptides and proteins that result from spontaneous decomposition of normal L-aspartyl and L-asparaginyl residues. It plays a role in the repair and/or degradation of damaged proteins. In Staphylothermus marinus (strain ATCC 43588 / DSM 3639 / JCM 9404 / F1), this protein is Protein-L-isoaspartate O-methyltransferase.